Consider the following 609-residue polypeptide: Proteasome-associated ATPase (609 aa).

Residues 1–24 (MGESERSEAFGIPRDSPLSSGDAA) are disordered. Residues 20–96 (SGDAAELEQL…LREEVDRLGQ (77 aa)) adopt a coiled-coil conformation. 296 to 301 (GCGKTL) contacts ATP. The tract at residues 608-609 (YL) is docks into pockets in the proteasome alpha-ring.

This sequence belongs to the AAA ATPase family. In terms of assembly, homohexamer. Assembles into a hexameric ring structure that caps the 20S proteasome core. Strongly interacts with the prokaryotic ubiquitin-like protein Pup through a hydrophobic interface; the interacting region of ARC lies in its N-terminal coiled-coil domain. There is one Pup binding site per ARC hexamer ring. Upon ATP-binding, the C-terminus of ARC interacts with the alpha-rings of the proteasome core, possibly by binding to the intersubunit pockets.

It participates in protein degradation; proteasomal Pup-dependent pathway. In terms of biological role, ATPase which is responsible for recognizing, binding, unfolding and translocation of pupylated proteins into the bacterial 20S proteasome core particle. May be essential for opening the gate of the 20S proteasome via an interaction with its C-terminus, thereby allowing substrate entry and access to the site of proteolysis. Thus, the C-termini of the proteasomal ATPase may function like a 'key in a lock' to induce gate opening and therefore regulate proteolysis. The protein is Proteasome-associated ATPase of Mycobacterium bovis (strain BCG / Pasteur 1173P2).